Reading from the N-terminus, the 149-residue chain is MNKMTNNKTIWMKPRYVKKKWYVIDASDKVLGRIATEAIKILRGKHKPYYTPHQDLGDNVVIINASKVKLTGKKYFQKIYYRHSRYPGGLYSDTYRTLSERKPTAPLEIAIKGMLPKGPLGRELFRNLKVFADANHKLSSQNLYKLEAN.

Belongs to the universal ribosomal protein uL13 family. In terms of assembly, part of the 50S ribosomal subunit.

Functionally, this protein is one of the early assembly proteins of the 50S ribosomal subunit, although it is not seen to bind rRNA by itself. It is important during the early stages of 50S assembly. This Borrelia recurrentis (strain A1) protein is Large ribosomal subunit protein uL13.